We begin with the raw amino-acid sequence, 120 residues long: MFYWILLALAIATEITGTLSMKWASVGNGNAGFILMLVMITLSYIFLSFAVKKIALGVAYALWEGIGILFITIFSVLLFDEALSTMKIAGLLTLVAGIVLIKSGTRKPGKPVKEATRATI.

4 helical membrane passes run 1-21 (MFYW…TLSM), 31-51 (AGFI…SFAV), 54-74 (IALG…ITIF), and 81-101 (EALS…IVLI).

It belongs to the drug/metabolite transporter (DMT) superfamily. Small multidrug resistance (SMR) (TC 2.A.7.1) family. MdtJ subfamily. As to quaternary structure, forms a complex with MdtI.

It is found in the cell inner membrane. Catalyzes the excretion of spermidine. The polypeptide is Spermidine export protein MdtJ (Salmonella choleraesuis (strain SC-B67)).